We begin with the raw amino-acid sequence, 2185 residues long: Genome polyprotein (2185 aa).

Gly-2 is lipidated: N-myristoyl glycine; by host. Topologically, residues 2 to 1495 (GAQVSTQKTG…HVNRAFICLQ (1494 aa)) are cytoplasmic. Positions 566–582 (FFQGPPGEVVERAIARV) are amphipathic alpha-helix. Active-site for protease 2A activity residues include His-872 and Asp-890. 2 residues coordinate Zn(2+): Cys-907 and Cys-909. The active-site For protease 2A activity is the Cys-961. 2 residues coordinate Zn(2+): Cys-967 and His-969. The segment at 1101 to 1173 (NSGWLKKFTE…EQSAPSQSDQ (73 aa)) is membrane-binding. Residues 1101–1239 (NSGWLKKFTE…SPGAGKSVAT (139 aa)) are oligomerization. Positions 1122–1126 (AIKIQ) are RNA-binding. The 157-residue stretch at 1205-1361 (EKKMSNYIQF…SMYSQNGKIN (157 aa)) folds into the SF3 helicase domain. Residues Cys-1369, Cys-1381, and Cys-1386 each contribute to the Zn(2+) site. A C4-type; degenerate zinc finger spans residues 1369-1386 (CDEECCPVNFKKCCPLVC). The interval 1413-1420 (EYNHRHSV) is RNA-binding. The segment at 1424-1429 (LEALFQ) is oligomerization. An intramembrane segment occupies 1496 to 1511 (ALTTFVSVAGIIYIIY). Topologically, residues 1512-2185 (KLFAGFQGAY…TLRRKWLDSF (674 aa)) are cytoplasmic. Position 1521 is an O-(5'-phospho-RNA)-tyrosine (Tyr-1521). The region spanning 1541 to 1719 (GPAFEFAVAM…FSAALLRHYF (179 aa)) is the Peptidase C3 domain. Active-site for protease 3C activity residues include His-1580, Glu-1611, and Cys-1687. The 117-residue stretch at 1950 to 2066 (GHLIAFDYSG…SYPWPIDASL (117 aa)) folds into the RdRp catalytic domain. Residues Asp-1956 and Asp-2052 each coordinate Mg(2+).

The protein belongs to the picornaviruses polyprotein family. In terms of assembly, interacts with capsid protein VP1 and capsid protein VP3 to form heterotrimeric protomers. Interacts with capsid protein VP0, and capsid protein VP3 to form heterotrimeric protomers. Five protomers subsequently associate to form pentamers which serve as building blocks for the capsid. Interacts with capsid protein VP2, capsid protein VP3 and capsid protein VP4 following cleavage of capsid protein VP0. As to quaternary structure, interacts with capsid protein VP1 and capsid protein VP3 in the mature capsid. In terms of assembly, interacts with capsid protein VP0 and capsid protein VP1 to form heterotrimeric protomers. Five protomers subsequently associate to form pentamers which serve as building blocks for the capsid. Interacts with capsid protein VP4 in the mature capsid. Interacts with protein 2C; this interaction may be important for virion morphogenesis. Interacts with capsid protein VP1 and capsid protein VP3. As to quaternary structure, homodimer. In terms of assembly, homohexamer; forms a hexameric ring structure with 6-fold symmetry characteristic of AAA+ ATPases. Interacts (via N-terminus) with host RTN3 (via reticulon domain); this interaction is important for viral replication. Interacts with capsid protein VP3; this interaction may be important for virion morphogenesis. Interacts with protein 3CD. As to quaternary structure, homodimer. Interacts with host GBF1. Interacts (via GOLD domain) with host ACBD3 (via GOLD domain); this interaction allows the formation of a viral protein 3A/ACBD3 heterotetramer with a 2:2 stoichiometry, which will stimulate the recruitment of host PI4KB in order to synthesize PI4P at the viral RNA replication sites. In terms of assembly, interacts with RNA-directed RNA polymerase. Interacts with protein 3AB and with RNA-directed RNA polymerase. As to quaternary structure, interacts with Viral protein genome-linked and with protein 3CD. Requires Mg(2+) as cofactor. Post-translationally, specific enzymatic cleavages in vivo by the viral proteases yield processing intermediates and the mature proteins. In terms of processing, myristoylation is required for the formation of pentamers during virus assembly. Further assembly of 12 pentamers and a molecule of genomic RNA generates the provirion. During virion maturation, immature virions are rendered infectious following cleavage of VP0 into VP4 and VP2. This maturation seems to be an autocatalytic event triggered by the presence of RNA in the capsid and it is followed by a conformational change infectious virion. Post-translationally, myristoylation is required during RNA encapsidation and formation of the mature virus particle. In terms of processing, VPg is uridylylated by the polymerase into VPg-pUpU. This acts as a nucleotide-peptide primer for the genomic RNA replication.

It localises to the virion. Its subcellular location is the host cytoplasm. The protein resides in the host cytoplasmic vesicle membrane. The protein localises to the host nucleus. It catalyses the reaction a ribonucleoside 5'-triphosphate + H2O = a ribonucleoside 5'-diphosphate + phosphate + H(+). It carries out the reaction Selective cleavage of Tyr-|-Gly bond in the picornavirus polyprotein.. The enzyme catalyses RNA(n) + a ribonucleoside 5'-triphosphate = RNA(n+1) + diphosphate. The catalysed reaction is Selective cleavage of Gln-|-Gly bond in the poliovirus polyprotein. In other picornavirus reactions Glu may be substituted for Gln, and Ser or Thr for Gly.. Replication or transcription is subject to high level of random mutations by the nucleotide analog ribavirin. Functionally, forms an icosahedral capsid of pseudo T=3 symmetry with capsid proteins VP2 and VP3. The capsid is 300 Angstroms in diameter, composed of 60 copies of each capsid protein and enclosing the viral positive strand RNA genome. Capsid protein VP1 mainly forms the vertices of the capsid. Capsid protein VP1 interacts with host cell receptor to provide virion attachment to target host cells. This attachment induces virion internalization. Tyrosine kinases are probably involved in the entry process. After binding to its receptor, the capsid undergoes conformational changes. Capsid protein VP1 N-terminus (that contains an amphipathic alpha-helix) and capsid protein VP4 are externalized. Together, they shape a pore in the host membrane through which viral genome is translocated to host cell cytoplasm. In terms of biological role, forms an icosahedral capsid of pseudo T=3 symmetry with capsid proteins VP2 and VP3. The capsid is 300 Angstroms in diameter, composed of 60 copies of each capsid protein and enclosing the viral positive strand RNA genome. Its function is as follows. Lies on the inner surface of the capsid shell. After binding to the host receptor, the capsid undergoes conformational changes. Capsid protein VP4 is released, Capsid protein VP1 N-terminus is externalized, and together, they shape a pore in the host membrane through which the viral genome is translocated into the host cell cytoplasm. Component of immature procapsids, which is cleaved into capsid proteins VP4 and VP2 after maturation. Allows the capsid to remain inactive before the maturation step. Functionally, cysteine protease that cleaves viral polyprotein and specific host proteins. It is responsible for the autocatalytic cleavage between the P1 and P2 regions, which is the first cleavage occurring in the polyprotein. Also cleaves the host translation initiation factor EIF4G1, in order to shut down the capped cellular mRNA translation. Inhibits the host nucleus-cytoplasm protein and RNA trafficking by cleaving host members of the nuclear pores. Counteracts stress granule formation probably by antagonizing its assembly or promoting its dissassembly. In terms of biological role, plays an essential role in the virus replication cycle by acting as a viroporin. Creates a pore in the host endoplasmic reticulum and as a consequence releases Ca2+ in the cytoplasm of infected cell. In turn, high levels of cytoplasmic calcium may trigger membrane trafficking and transport of viral ER-associated proteins to viroplasms, sites of viral genome replication. Its function is as follows. Induces and associates with structural rearrangements of intracellular membranes. Displays RNA-binding, nucleotide binding and NTPase activities. May play a role in virion morphogenesis and viral RNA encapsidation by interacting with the capsid protein VP3. Localizes the viral replication complex to the surface of membranous vesicles. Together with protein 3CD binds the Cis-Active RNA Element (CRE) which is involved in RNA synthesis initiation. Acts as a cofactor to stimulate the activity of 3D polymerase, maybe through a nucleid acid chaperone activity. Functionally, localizes the viral replication complex to the surface of membranous vesicles. It inhibits host cell endoplasmic reticulum-to-Golgi apparatus transport and causes the disassembly of the Golgi complex, possibly through GBF1 interaction. This would result in depletion of MHC, trail receptors and IFN receptors at the host cell surface. Plays an essential role in viral RNA replication by recruiting ACBD3 and PI4KB at the viral replication sites, thereby allowing the formation of the rearranged membranous structures where viral replication takes place. In terms of biological role, acts as a primer for viral RNA replication and remains covalently bound to viral genomic RNA. VPg is uridylylated prior to priming replication into VPg-pUpU. The oriI viral genomic sequence may act as a template for this. The VPg-pUpU is then used as primer on the genomic RNA poly(A) by the RNA-dependent RNA polymerase to replicate the viral genome. During genome replication, the VPg-RNA linkage is removed by the host TDP2, thereby accelerating replication. During the late stage of the replication cycle, host TDP2 is excluded from sites of viral RNA synthesis and encapsidation, allowing for the generation of progeny virions. Its function is as follows. Involved in the viral replication complex and viral polypeptide maturation. It exhibits protease activity with a specificity and catalytic efficiency that is different from protease 3C. Protein 3CD lacks polymerase activity. Protein 3CD binds to the 5'UTR of the viral genome. Major viral protease that mediates proteolytic processing of the polyprotein. Cleaves host EIF5B, contributing to host translation shutoff. Also cleaves host PABPC1, contributing to host translation shutoff. Cleaves host NLRP1, triggers host N-glycine-mediated degradation of the autoinhibitory NLRP1 N-terminal fragment. Functionally, replicates the viral genomic RNA on the surface of intracellular membranes. May form linear arrays of subunits that propagate along a strong head-to-tail interaction called interface-I. Covalently attaches UMP to a tyrosine of VPg, which is used to prime RNA synthesis. The positive stranded RNA genome is first replicated at virus induced membranous vesicles, creating a dsRNA genomic replication form. This dsRNA is then used as template to synthesize positive stranded RNA genomes. ss(+)RNA genomes are either translated, replicated or encapsidated. This chain is Genome polyprotein, found in Swine vesicular disease virus (strain H/3 '76) (SVDV).